Consider the following 154-residue polypeptide: Ribosome maturation factor RimP (154 aa).

The protein belongs to the RimP family.

The protein resides in the cytoplasm. Its function is as follows. Required for maturation of 30S ribosomal subunits. This is Ribosome maturation factor RimP from Clostridium novyi (strain NT).